A 95-amino-acid polypeptide reads, in one-letter code: Aspartyl/glutamyl-tRNA(Asn/Gln) amidotransferase subunit C (95 aa).

It belongs to the GatC family. As to quaternary structure, heterotrimer of A, B and C subunits.

It catalyses the reaction L-glutamyl-tRNA(Gln) + L-glutamine + ATP + H2O = L-glutaminyl-tRNA(Gln) + L-glutamate + ADP + phosphate + H(+). It carries out the reaction L-aspartyl-tRNA(Asn) + L-glutamine + ATP + H2O = L-asparaginyl-tRNA(Asn) + L-glutamate + ADP + phosphate + 2 H(+). Its function is as follows. Allows the formation of correctly charged Asn-tRNA(Asn) or Gln-tRNA(Gln) through the transamidation of misacylated Asp-tRNA(Asn) or Glu-tRNA(Gln) in organisms which lack either or both of asparaginyl-tRNA or glutaminyl-tRNA synthetases. The reaction takes place in the presence of glutamine and ATP through an activated phospho-Asp-tRNA(Asn) or phospho-Glu-tRNA(Gln). This chain is Aspartyl/glutamyl-tRNA(Asn/Gln) amidotransferase subunit C, found in Prochlorococcus marinus (strain NATL2A).